The sequence spans 739 residues: DEAD-box ATP-dependent RNA helicase 32 (739 aa).

Positions 71–99 (RKFAQLPISDKTKRGLKDAKYVDMTDVQS) match the Q motif motif. Residues 102–277 (IPHALCGRDI…RLSLRDPEYI (176 aa)) enclose the Helicase ATP-binding domain. Residue 115–122 (ARTGSGKT) participates in ATP binding. A DEAD box motif is present at residues 225–228 (DEAD). In terms of domain architecture, Helicase C-terminal spans 303 to 461 (KLDMLWSFIK…EVSRLLAALL (159 aa)). Positions 643–689 (GAEMRKADIEDKKVDKERRREKRMKQKIKRKRGAMEDEEEEEEEDHD) form a coiled coil. The interval 656-725 (VDKERRREKR…GGKINTDSLS (70 aa)) is disordered. Residues 661–674 (RREKRMKQKIKRKR) are compositionally biased toward basic residues. Acidic residues predominate over residues 678 to 688 (EDEEEEEEEDH).

It belongs to the DEAD box helicase family. DDX10/DBP4 subfamily.

The catalysed reaction is ATP + H2O = ADP + phosphate + H(+). This Arabidopsis thaliana (Mouse-ear cress) protein is DEAD-box ATP-dependent RNA helicase 32 (RH32).